We begin with the raw amino-acid sequence, 126 residues long: Fluoride-specific ion channel FluC (126 aa).

The next 4 membrane-spanning stretches (helical) occupy residues 3-23 (FAILGFIALGGAVGACARFLV), 37-57 (IGTLTVNVVGSFIMGVLIACV), 70-90 (VIGLGFLGALTTFSTFSMDNV), and 104-124 (NVLLNVILSISAAWIGFHWLM). Residues Gly-77 and Thr-80 each contribute to the Na(+) site.

This sequence belongs to the fluoride channel Fluc/FEX (TC 1.A.43) family.

Its subcellular location is the cell inner membrane. The enzyme catalyses fluoride(in) = fluoride(out). With respect to regulation, na(+) is not transported, but it plays an essential structural role and its presence is essential for fluoride channel function. Fluoride-specific ion channel. Important for reducing fluoride concentration in the cell, thus reducing its toxicity. The polypeptide is Fluoride-specific ion channel FluC (Vibrio cholerae serotype O1 (strain ATCC 39541 / Classical Ogawa 395 / O395)).